Here is a 445-residue protein sequence, read N- to C-terminus: Phosphoglucosamine mutase (445 aa).

The Phosphoserine intermediate role is filled by Ser99. Residues Ser99, Asp242, Asp244, and Asp246 each contribute to the Mg(2+) site. Position 99 is a phosphoserine (Ser99).

Belongs to the phosphohexose mutase family. Requires Mg(2+) as cofactor. In terms of processing, activated by phosphorylation.

The enzyme catalyses alpha-D-glucosamine 1-phosphate = D-glucosamine 6-phosphate. Its function is as follows. Catalyzes the conversion of glucosamine-6-phosphate to glucosamine-1-phosphate. In Helicobacter pylori (strain G27), this protein is Phosphoglucosamine mutase.